Reading from the N-terminus, the 226-residue chain is Ribose-5-phosphate isomerase A (226 aa).

Residues 28-31 (TGST), 84-87 (DGAD), and 97-100 (KGLG) contribute to the substrate site. Catalysis depends on E106, which acts as the Proton acceptor. Residue K124 participates in substrate binding.

The protein belongs to the ribose 5-phosphate isomerase family. Homodimer.

The catalysed reaction is aldehydo-D-ribose 5-phosphate = D-ribulose 5-phosphate. It functions in the pathway carbohydrate degradation; pentose phosphate pathway; D-ribose 5-phosphate from D-ribulose 5-phosphate (non-oxidative stage): step 1/1. Its function is as follows. Catalyzes the reversible conversion of ribose-5-phosphate to ribulose 5-phosphate. The sequence is that of Ribose-5-phosphate isomerase A from Deinococcus radiodurans (strain ATCC 13939 / DSM 20539 / JCM 16871 / CCUG 27074 / LMG 4051 / NBRC 15346 / NCIMB 9279 / VKM B-1422 / R1).